An 825-amino-acid chain; its full sequence is Trimethylamine-N-oxide reductase (825 aa).

Positions 1-40 (MKKNNVNEQRRDFLKKTSLGVAGSALSGGMVGVVSKSAVA) form a signal peptide, tat-type signal. Residue serine 187 coordinates Mo-bis(molybdopterin guanine dinucleotide).

The protein belongs to the prokaryotic molybdopterin-containing oxidoreductase family. Mo-bis(molybdopterin guanine dinucleotide) is required as a cofactor. In terms of processing, predicted to be exported by the Tat system. The position of the signal peptide cleavage has not been experimentally proven.

Its subcellular location is the periplasm. It carries out the reaction trimethylamine + 2 Fe(III)-[cytochrome c] + H2O = trimethylamine N-oxide + 2 Fe(II)-[cytochrome c] + 3 H(+). Reduces trimethylamine-N-oxide (TMAO) into trimethylamine; an anaerobic reaction coupled to energy-yielding reactions. This is Trimethylamine-N-oxide reductase (torZ) from Haemophilus influenzae (strain ATCC 51907 / DSM 11121 / KW20 / Rd).